Here is a 435-residue protein sequence, read N- to C-terminus: Angio-associated migratory cell protein (435 aa).

Positions 1 to 65 are disordered; it reads MESESESGAA…EEEEEGNEEG (65 aa). Residue serine 20 is modified to Phosphoserine. Residues 39–63 show a composition bias toward acidic residues; it reads DPDDLAQEMEDVDFEEEEEEEEGNE. 8 WD repeats span residues 90–130, 133–172, 174–213, 215–255, 259–300, 316–355, 357–396, and 399–434; these read LHSA…LLFE, GHKD…EVWS, EAGD…KTFQ, PNCP…HVLK, GHQG…GVFR, SESN…LRHQ, QHQS…LLTD, and GHTA…QRPD.

It is found in the cell membrane. Its subcellular location is the cytoplasm. In terms of biological role, plays a role in angiogenesis and cell migration. In smooth muscle cell migration, may act through the RhoA pathway. This chain is Angio-associated migratory cell protein (AAMP), found in Canis lupus familiaris (Dog).